Reading from the N-terminus, the 228-residue chain is Urease accessory protein UreG (228 aa).

34–41 lines the GTP pocket; that stretch reads GPVGSGKT.

It belongs to the SIMIBI class G3E GTPase family. UreG subfamily. Homodimer. UreD, UreF and UreG form a complex that acts as a GTP-hydrolysis-dependent molecular chaperone, activating the urease apoprotein by helping to assemble the nickel containing metallocenter of UreC. The UreE protein probably delivers the nickel.

The protein localises to the cytoplasm. In terms of biological role, facilitates the functional incorporation of the urease nickel metallocenter. This process requires GTP hydrolysis, probably effectuated by UreG. This chain is Urease accessory protein UreG, found in Rhodococcus opacus (strain B4).